A 144-amino-acid polypeptide reads, in one-letter code: MRLNTLSPAAGSKPSKKRVGRGIGSGLGKTGGRGHKGQKSRSGGKVRAGFEGGQMPLKQRLPKFGFTSRKSLVTAEVRLSELAKVEGNVIDLNSLKAANVITKNIEFAKVVLSGEIATAVTVKGLRVTKGAKAAIEAAGGKIEE.

Positions M1–G52 are disordered. The segment covering R21 to G31 has biased composition (gly residues). Residues G32–G44 are compositionally biased toward basic residues.

Belongs to the universal ribosomal protein uL15 family. In terms of assembly, part of the 50S ribosomal subunit.

Its function is as follows. Binds to the 23S rRNA. In Aliivibrio fischeri (strain ATCC 700601 / ES114) (Vibrio fischeri), this protein is Large ribosomal subunit protein uL15.